Here is a 266-residue protein sequence, read N- to C-terminus: Undecaprenyl-diphosphatase (266 aa).

7 helical membrane-spanning segments follow: residues 41-61 (NLAFTIVVHVATVFSTLVVLW), 80-100 (TKYVINILISMIPIGIVGVFF), 107-127 (IFGSGLLVVGCMLLLTAALLA), 140-160 (ISMKDAFIIGLAQACAVMPGL), 180-200 (LAQFSFLMVIPPILGEALLDV), 213-233 (IPALSLAVGFMAAFVSGCVAC), and 245-265 (LIYFAIYCAIAGLVTIACTLL).

Belongs to the UppP family.

It is found in the cell inner membrane. The catalysed reaction is di-trans,octa-cis-undecaprenyl diphosphate + H2O = di-trans,octa-cis-undecaprenyl phosphate + phosphate + H(+). Its function is as follows. Catalyzes the dephosphorylation of undecaprenyl diphosphate (UPP). Confers resistance to bacitracin. This Parabacteroides distasonis (strain ATCC 8503 / DSM 20701 / CIP 104284 / JCM 5825 / NCTC 11152) protein is Undecaprenyl-diphosphatase.